Here is a 360-residue protein sequence, read N- to C-terminus: Galactoside alpha-(1,2)-fucosyltransferase 1 (360 aa).

Residues 1 to 8 (MWAPGHHH) are Cytoplasmic-facing. Residues 9–27 (LCLIFLLTCVFACVFFLLI) form a helical; Signal-anchor for type II membrane protein membrane-spanning segment. Residues 28 to 360 (HQNLFHSGLD…GINADLSPLQ (333 aa)) lie on the Lumenal side of the membrane. 3 N-linked (GlcNAc...) asparagine glycosylation sites follow: Asn65, Asn301, and Asn327.

Belongs to the glycosyltransferase 11 family. Expressed in brain, intestine and kidney.

Its subcellular location is the golgi apparatus. It localises to the golgi stack membrane. It carries out the reaction a ganglioside GM1 + GDP-beta-L-fucose = a ganglioside Fuc-GM1 + GDP + H(+). The enzyme catalyses a beta-D-galactosyl-(1-&gt;4)-N-acetyl-beta-D-glucosaminyl derivative + GDP-beta-L-fucose = an alpha-L-Fuc-(1-&gt;2)-beta-D-Gal-(1-&gt;4)-beta-D-GlcNAc derivative + GDP + H(+). The catalysed reaction is a ganglioside GA1 + GDP-beta-L-fucose = a ganglioside Fuc-GA1 + GDP + H(+). It catalyses the reaction a beta-D-Gal-(1-&gt;3)-beta-D-GlcNAc-(1-&gt;3)-beta-D-Gal-(1-&gt;4)-beta-D-Glc-(1&lt;-&gt;1')-Cer(d18:1(4E)) + GDP-beta-L-fucose = alpha-L-fucosyl-(1-&gt;2)- beta-D-galactosyl-(1-&gt;3)-N-acetyl-beta-D-glucosaminyl-(1-&gt;3)-beta-D-galactosyl-(1-&gt;4)-beta-D-glucosyl-(1&lt;-&gt;1')-N-acylsphing-4-enine + GDP + H(+). It carries out the reaction a neolactoside nLc4Cer(d18:1(4E)) + GDP-beta-L-fucose = a neolactoside IV(2)-alpha-Fuc-nLc4Cer(d18:1(4E)) + GDP + H(+). The enzyme catalyses beta-D-galactosyl-(1-&gt;3)-N-acetyl-D-galactosamine + GDP-beta-L-fucose = alpha-L-fucosyl-(1-&gt;2)-beta-D-galactosyl-(1-&gt;3)-N-acetyl-D-galactosamine + GDP + H(+). It participates in protein modification; protein glycosylation. Catalyzes the transfer of L-fucose, from a guanosine diphosphate-beta-L-fucose, to the terminal galactose residue of glycoconjugates through an alpha(1,2) linkage leading to H antigen synthesis that is an intermediate substrate in the synthesis of ABO blood group antigens. H antigen is essential for maturation of the glomerular layer of the main olfactory bulb, in cell migration and early cell-cell contacts during tumor associated angiogenesis. Preferentially fucosylates soluble lactose and to a lesser extent, fucosylates glycolipids gangliosides GA1 and GM1a. The protein is Galactoside alpha-(1,2)-fucosyltransferase 1 of Bos taurus (Bovine).